The sequence spans 318 residues: MLHLIYISIIVVLIIILISYTRKPKYFRITAPRSVALFHGIHPLKPKNYKTFSEEFETILNNAIEDGDFKGQLTEPCSYALRGGKYIRPIILMEIVRACQLQHSFGAPIYPAEAALAVEYFHVASLIIDDMPSFDNDVKRRNKDTVWARFGVAKAQMSALALTMQGFQNICRQIDWIKEHCPRFPDPNQLGALLCTFVSHSLNSAGSGQLVDTPEKTIPFFKIAFIMGWVLGTGTIEDIGMIERAAHCFGNAFQLADDIKDHDTDTGWNYAKIHGKRKTFDDVAQSLQECKKILHGKKIYTSIWNEIFQKVINVALGT.

A helical membrane pass occupies residues 1–21 (MLHLIYISIIVVLIIILISYT). Lys-85, Arg-88, and His-122 together coordinate isopentenyl diphosphate. Asp-129 and Asp-135 together coordinate Mg(2+). Arg-140 is a binding site for dimethylallyl diphosphate. Residue Arg-141 participates in isopentenyl diphosphate binding. Positions 216, 217, and 254 each coordinate dimethylallyl diphosphate.

The protein belongs to the FPP/GGPP synthase family. Asfivirus trans-prenyltransferase subfamily. Mg(2+) serves as cofactor.

The protein localises to the host endoplasmic reticulum. It localises to the host membrane. It catalyses the reaction isopentenyl diphosphate + dimethylallyl diphosphate = (2E)-geranyl diphosphate + diphosphate. It carries out the reaction isopentenyl diphosphate + (2E)-geranyl diphosphate = (2E,6E)-farnesyl diphosphate + diphosphate. The catalysed reaction is isopentenyl diphosphate + (2E,6E)-farnesyl diphosphate = (2E,6E,10E)-geranylgeranyl diphosphate + diphosphate. The enzyme catalyses isopentenyl diphosphate + (2E,6E,10E)-geranylgeranyl diphosphate = (2E,6E,10E,14E)-geranylfarnesyl diphosphate + diphosphate. It participates in isoprenoid biosynthesis; farnesyl diphosphate biosynthesis; farnesyl diphosphate from geranyl diphosphate and isopentenyl diphosphate: step 1/1. Its pathway is isoprenoid biosynthesis; geranyl diphosphate biosynthesis; geranyl diphosphate from dimethylallyl diphosphate and isopentenyl diphosphate: step 1/1. It functions in the pathway isoprenoid biosynthesis; geranylgeranyl diphosphate biosynthesis; geranylgeranyl diphosphate from farnesyl diphosphate and isopentenyl diphosphate: step 1/1. In terms of biological role, trans-prenyltransferase that catalyzes the sequential condensation of isopentenyl diphosphate (IPP) with different allylic diphosphates, such as dimethylallyl diphosphate (DMAPP), geranyl diphosphate (GPP), farnesyl diphosphate (FPP) and geranylgeranyl diphosphate (GGPP), farnesyl diphosphate being the best allylic substrate. The polypeptide is Trans-prenyltransferase (African swine fever virus (isolate Tick/South Africa/Pretoriuskop Pr4/1996) (ASFV)).